A 355-amino-acid chain; its full sequence is Epoxide hydrolase 2 (355 aa).

An AB hydrolase-1 domain is found at valine 78–glutamine 323. Aspartate 152 acts as the Nucleophile in catalysis. Catalysis depends on tyrosine 263, which acts as the Proton donor. Histidine 319 serves as the catalytic Proton acceptor.

The protein belongs to the AB hydrolase superfamily. Epoxide hydrolase family.

The enzyme catalyses an epoxide + H2O = an ethanediol. Its pathway is lipid metabolism. Catalyzes the hydrolysis of epoxide-containing fatty acids. Active in vitro against trans-1,3-diphenylpropene oxide (t-DPPO), epoxyeicosatrienoic acids (EETs) including 8,9-EET, 11,12-EET and 14,15-EET and the linoleic acid metabolites 12,13-epoxy-9-octadecenoate (12,13-EpOME) and 9,10-epoxy-12-octadecenoate (9,10-EpOME). The chain is Epoxide hydrolase 2 from Caenorhabditis elegans.